Consider the following 477-residue polypeptide: Aspartyl/glutamyl-tRNA(Asn/Gln) amidotransferase subunit B (477 aa).

The protein belongs to the GatB/GatE family. GatB subfamily. As to quaternary structure, heterotrimer of A, B and C subunits.

It catalyses the reaction L-glutamyl-tRNA(Gln) + L-glutamine + ATP + H2O = L-glutaminyl-tRNA(Gln) + L-glutamate + ADP + phosphate + H(+). The catalysed reaction is L-aspartyl-tRNA(Asn) + L-glutamine + ATP + H2O = L-asparaginyl-tRNA(Asn) + L-glutamate + ADP + phosphate + 2 H(+). Its function is as follows. Allows the formation of correctly charged Asn-tRNA(Asn) or Gln-tRNA(Gln) through the transamidation of misacylated Asp-tRNA(Asn) or Glu-tRNA(Gln) in organisms which lack either or both of asparaginyl-tRNA or glutaminyl-tRNA synthetases. The reaction takes place in the presence of glutamine and ATP through an activated phospho-Asp-tRNA(Asn) or phospho-Glu-tRNA(Gln). The sequence is that of Aspartyl/glutamyl-tRNA(Asn/Gln) amidotransferase subunit B from Nitrosococcus oceani (strain ATCC 19707 / BCRC 17464 / JCM 30415 / NCIMB 11848 / C-107).